The chain runs to 212 residues: Thymidylate kinase (212 aa).

Residue Ala-2 is modified to N-acetylalanine. ATP is bound by residues 16–21 (RAGKTT) and Arg-97. An LID region spans residues 133–157 (LQLQLLDAAARGEFGLERYETGTFQ). ATP-binding residues include Lys-182 and Arg-192.

Belongs to the thymidylate kinase family. As to quaternary structure, homodimer. It depends on Mg(2+) as a cofactor.

The catalysed reaction is dTMP + ATP = dTDP + ADP. Its pathway is pyrimidine metabolism; dTTP biosynthesis. In terms of biological role, catalyzes the phosphorylation of thymidine monophosphate (dTMP) to thymidine diphosphate (dTDP), the immediate precursor for the DNA building block dTTP, with ATP as the preferred phosphoryl donor in the presence of Mg(2+). The polypeptide is Thymidylate kinase (Dtymk) (Mus musculus (Mouse)).